Here is a 309-residue protein sequence, read N- to C-terminus: Olfactory receptor 14A16 (309 aa).

Residues Met-1–Ile-23 are Extracellular-facing. Asn-3 is a glycosylation site (N-linked (GlcNAc...) asparagine). A helical transmembrane segment spans residues Leu-24–Ile-44. At Met-45–His-52 the chain is on the cytoplasmic side. The chain crosses the membrane as a helical span at residues Leu-53 to Ser-73. Residues Val-74–Ser-97 lie on the Extracellular side of the membrane. N-linked (GlcNAc...) asparagine glycosylation occurs at Asn-87. Cys-95 and Cys-187 form a disulfide bridge. A helical membrane pass occupies residues Gln-98–Phe-118. Residues Asp-119–Asp-131 lie on the Cytoplasmic side of the membrane. Residues Val-132 to Leu-152 form a helical membrane-spanning segment. Residues Ile-153 to Glu-194 lie on the Extracellular side of the membrane. Residues Ile-195 to Thr-215 form a helical membrane-spanning segment. Residues Tyr-216 to Ala-235 are Cytoplasmic-facing. Residues Tyr-236–Ala-255 form a helical membrane-spanning segment. Over Tyr-256–Asp-268 the chain is Extracellular. Residues Ala-269 to Leu-289 form a helical membrane-spanning segment. Over Arg-290–Lys-309 the chain is Cytoplasmic.

Belongs to the G-protein coupled receptor 1 family.

The protein resides in the cell membrane. Functionally, odorant receptor. The sequence is that of Olfactory receptor 14A16 (OR14A16) from Homo sapiens (Human).